Consider the following 726-residue polypeptide: ORC ubiquitin ligase 1 (726 aa).

An RING-type; degenerate zinc finger spans residues C18–R56. Coiled-coil stretches lie at residues L87–D129 and E155–I270. Residue S210 is modified to Phosphoserine. The segment at A274–E335 is disordered. Positions K280–A290 are enriched in basic and acidic residues. The span at K300–L320 shows a compositional bias: low complexity. Residues C321 to A334 are compositionally biased toward polar residues. 7 positions are modified to phosphoserine: S526, S553, S561, S568, S570, S719, and S721. The segment at Q687–S726 is disordered. The segment covering N702–S726 has biased composition (polar residues).

As to quaternary structure, associates with ORC complex. Binds to chromatin; association is cell cycle-regulated, absent from mitotic chromosomes, is associated with chromatin from G1 and partially released from chromatin from mid S-phase. In terms of processing, auto-ubiquitinated.

The protein resides in the chromosome. It carries out the reaction S-ubiquitinyl-[E2 ubiquitin-conjugating enzyme]-L-cysteine + [acceptor protein]-L-lysine = [E2 ubiquitin-conjugating enzyme]-L-cysteine + N(6)-ubiquitinyl-[acceptor protein]-L-lysine.. E3 ubiquitin ligase essential for DNA replication origin activation during S phase. Acts as a replication origin selector which selects the origins to be fired and catalyzes the multi-mono-ubiquitination of a subset of chromatin-bound ORC3 and ORC5 during S-phase. The sequence is that of ORC ubiquitin ligase 1 (OBI1) from Pongo abelii (Sumatran orangutan).